Here is a 277-residue protein sequence, read N- to C-terminus: Peptide deformylase 1A, chloroplastic (277 aa).

Zn(2+) is bound by residues Cys196 and His238. Residue Glu239 is part of the active site. Position 242 (His242) interacts with Zn(2+).

It belongs to the polypeptide deformylase family. Zn(2+) is required as a cofactor.

The protein localises to the plastid. It is found in the chloroplast stroma. The enzyme catalyses N-terminal N-formyl-L-methionyl-[peptide] + H2O = N-terminal L-methionyl-[peptide] + formate. Functionally, removes the formyl group from the N-terminal Met of newly synthesized proteins. This Solanum lycopersicum (Tomato) protein is Peptide deformylase 1A, chloroplastic (PDF1A).